Reading from the N-terminus, the 91-residue chain is MKITDVRVRKLNDEGRMKAVVSVTFDNEFVVHDIKVIEGQNGLFIAMPSRKTPEGEFKDIAHPINSDTRNKLQKAILEEYEKAKENNSNKE.

The protein belongs to the SpoVG family.

Functionally, could be involved in septation. This Caldanaerobacter subterraneus subsp. tengcongensis (strain DSM 15242 / JCM 11007 / NBRC 100824 / MB4) (Thermoanaerobacter tengcongensis) protein is Putative septation protein SpoVG.